We begin with the raw amino-acid sequence, 340 residues long: Protein arginine N-methyltransferase 1 (340 aa).

The region spanning 16 to 311 (KDYYFDSYSH…TCKPAEGNHR (296 aa)) is the SAM-dependent MTase PRMT-type domain. A Phosphotyrosine modification is found at Tyr19. S-adenosyl-L-methionine contacts are provided by His29, Arg38, Gly62, Asp84, and Glu113. Catalysis depends on residues Glu128 and Glu137. A Phosphoserine modification is found at Ser176.

It belongs to the class I-like SAM-binding methyltransferase superfamily. Protein arginine N-methyltransferase family. In terms of assembly, interacts with pab2.

The protein resides in the nucleus. It catalyses the reaction L-arginyl-[protein] + S-adenosyl-L-methionine = N(omega)-methyl-L-arginyl-[protein] + S-adenosyl-L-homocysteine + H(+). The enzyme catalyses L-arginyl-[protein] + 2 S-adenosyl-L-methionine = N(omega),N(omega)-dimethyl-L-arginyl-[protein] + 2 S-adenosyl-L-homocysteine + 2 H(+). Functionally, S-adenosyl-L-methionine-dependent protein-arginine N-methyltransferase that catalyzes both the mono- and asymmetric (type I) dimethylation of the guanidino nitrogens of arginine residues in target proteins. Asymmetrically dimethylates the polyadenylate-binding protein pab2, modulating pab2 oligomerization. This Schizosaccharomyces pombe (strain 972 / ATCC 24843) (Fission yeast) protein is Protein arginine N-methyltransferase 1.